The primary structure comprises 278 residues: Probable NADP-dependent mannitol dehydrogenase (278 aa).

NADP(+) is bound by residues Ile45, Asn117, and Lys152. Residues Ser171 and Tyr186 each act as proton donor in the active site. NADP(+) is bound by residues Tyr186, Lys190, and Thr220. Lys190 (lowers pKa of active site Tyr) is an active-site residue.

It belongs to the short-chain dehydrogenases/reductases (SDR) family. Homotetramer.

It carries out the reaction D-mannitol + NADP(+) = D-fructose + NADPH + H(+). Its function is as follows. Versatile oxidoreductase that catalyzes the oxidation and reduction of polar as well as non-polar substrates at a very broad pH range. Preferentially oxidizes secondary alcohols. Has highest activity for racemic 2-heptanol and racemic octanol. Is also an efficient reductase for selected substrates. Substrate selectivity was found for medium chain length ketones with the carbonyl function at position C-2. Has highest activities for ribulose and fructose. The enzyme is (R)-selective in the reduction direction and produces exclusively the (R)-enantiomer. This chain is Probable NADP-dependent mannitol dehydrogenase, found in Yarrowia lipolytica (strain CLIB 122 / E 150) (Yeast).